A 339-amino-acid chain; its full sequence is Heat-inducible transcription repressor HrcA (339 aa).

It belongs to the HrcA family.

In terms of biological role, negative regulator of class I heat shock genes (grpE-dnaK-dnaJ and groELS operons). Prevents heat-shock induction of these operons. In Clostridium perfringens (strain ATCC 13124 / DSM 756 / JCM 1290 / NCIMB 6125 / NCTC 8237 / Type A), this protein is Heat-inducible transcription repressor HrcA.